The primary structure comprises 435 residues: Serine/threonine-protein kinase 40 (435 aa).

Residues 35–332 (FILGPRLGNS…EELDSLSSII (298 aa)) form the Protein kinase domain. Residues 41-49 (LGNSPVPSI) and lysine 66 each bind ATP. Catalysis depends on aspartate 197, which acts as the Proton acceptor.

It belongs to the protein kinase superfamily. CAMK Ser/Thr protein kinase family.

The protein resides in the nucleus. Its subcellular location is the cytoplasm. The catalysed reaction is L-seryl-[protein] + ATP = O-phospho-L-seryl-[protein] + ADP + H(+). It carries out the reaction L-threonyl-[protein] + ATP = O-phospho-L-threonyl-[protein] + ADP + H(+). May be a negative regulator of NF-kappa-B and p53-mediated gene transcription. In Gallus gallus (Chicken), this protein is Serine/threonine-protein kinase 40 (STK40).